The chain runs to 665 residues: non-specific serine/threonine protein kinase (665 aa).

The region spanning 145–597 is the Protein kinase domain; sequence FDVHCRIGSG…AEEALKHPFF (453 aa). ATP is bound by residues 151–159 and lysine 181; that span reads IGSGTFSTV. Residue aspartate 268 is the Proton acceptor of the active site.

This sequence belongs to the protein kinase superfamily. Ser/Thr protein kinase family. In terms of assembly, interacts with chif (via N-terminus).

It carries out the reaction L-seryl-[protein] + ATP = O-phospho-L-seryl-[protein] + ADP + H(+). The catalysed reaction is L-threonyl-[protein] + ATP = O-phospho-L-threonyl-[protein] + ADP + H(+). Functionally, probable serine/threonine protein kinase that forms a complex with the N-terminal peptide of the chiffon protein and may be involved in regulating meiotic processes in the male testis. This Drosophila melanogaster (Fruit fly) protein is non-specific serine/threonine protein kinase.